The primary structure comprises 686 residues: ATP-dependent DNA helicase RecG (686 aa).

Residues 50-149 are wedge domain; the sequence is TVIDLNQAED…GTQTQENADV (100 aa). A Helicase ATP-binding domain is found at 279–439; that stretch reads DLKAPIRMHR…VFGEMDVSSI (161 aa). Residue 292-299 participates in ATP binding; that stretch reads GDVGSGKT. A DEAH box motif is present at residues 392–395; sequence DEQH. The 157-residue stretch at 462 to 618 folds into the Helicase C-terminal domain; sequence VLMQMTSELK…GFELSERDLE (157 aa).

It belongs to the helicase family. RecG subfamily. Monomer.

It catalyses the reaction Couples ATP hydrolysis with the unwinding of duplex DNA by translocating in the 3'-5' direction.. The enzyme catalyses ATP + H2O = ADP + phosphate + H(+). In terms of biological role, plays a critical role in recombination and DNA repair. Helps process Holliday junction intermediates to mature products by catalyzing branch migration. Has replication fork regression activity, unwinds stalled or blocked replication forks to make a HJ that can be resolved. Has a DNA unwinding activity characteristic of a DNA helicase with 3'-5' polarity. This Staphylococcus aureus (strain NCTC 8325 / PS 47) protein is ATP-dependent DNA helicase RecG.